Reading from the N-terminus, the 120-residue chain is Small ribosomal subunit protein uS17m (120 aa).

Residues M1–T20 constitute a mitochondrion transit peptide.

Belongs to the universal ribosomal protein uS17 family. As to quaternary structure, component of the mitochondrial ribosome small subunit (28S) which comprises a 12S rRNA and about 30 distinct proteins.

The protein localises to the mitochondrion. The protein is Small ribosomal subunit protein uS17m (Mrps17) of Mus musculus (Mouse).